The following is a 683-amino-acid chain: MSALNSLPLPVVRLLAFFHEELSERRPGRVPQTMQLWVGCLLVILISMTFEIPFVALSLAVLFYGIQSNAFYTKFVAILFVVATVLEIASLFLIYKWSYGEPLIRLIIAGPILMSCMFLMRTHRLGLVFFAVAIVAIYGQTFPAMLDYPEAVVRLTLWCIVVGLYPTLLMTLIGVLWFPSRAITQMHQALNDRLDDAISHLTDSLAPLPETRIEREALALQKLNVFCLADDANWRTQSAWWQSCVATVTYIYSTLNRYDPTSFADSQAIIEFRQKLASEINKLQHSITEGQCWQSDWRISESEAMTARECNLENICQTLLQLGQMDPNTPPTPAAKPPSMVADAFTNPDYMRYAVKTLLACLICYTFYSGVDWEGIHTCMLTCVIVANPNVGSSYQKMVLRFGGAFCGAILALLFTLLVMPWLDNIVELLFVLAPIFLLGAWIATSSERSSYIGTQMVVTFALATLENVFGPVYDLVEIRDRALGIIIGTVVSAVIYTFVWPESEARTLPQKLAGALGMLSKVMRIPRQQEVTALRTYLHIRIGLHAAFNACEEMCQRVVLERQLDSEERALLIERSQTVIRQGRDILHAWDATWNSAQALDNALQPDRAGQFADALEKYAAGVATALSHSPQITLEETSASQAILPTLLKQEQHVCQLFARLPDWTAPALTPATEQAQGATQ.

The next 9 membrane-spanning stretches (helical) occupy residues 43 to 63 (VILISMTFEIPFVALSLAVLF), 75 to 95 (FVAILFVVATVLEIASLFLIY), 100 to 120 (GEPLIRLIIAGPILMSCMFLM), 125 to 145 (LGLVFFAVAIVAIYGQTFPAM), 158 to 178 (WCIVVGLYPTLLMTLIGVLWF), 402 to 422 (FGGAFCGAILALLFTLLVMPW), 426 to 446 (IVELLFVLAPIFLLGAWIATS), 457 to 477 (MVVTFALATLENVFGPVYDLV), and 483 to 503 (ALGIIIGTVVSAVIYTFVWPE).

Belongs to the MdtO family. Could be part of a tripartite efflux system composed of MdtN, MdtO and MdtP.

The protein resides in the cell inner membrane. Could be involved in resistance to puromycin, acriflavine and tetraphenylarsonium chloride. This Escherichia coli O6:H1 (strain CFT073 / ATCC 700928 / UPEC) protein is Multidrug resistance protein MdtO (mdtO).